A 90-amino-acid polypeptide reads, in one-letter code: Cytochrome c7 (90 aa).

An N-terminal signal peptide occupies residues 1–20; it reads MKRIIASLALSVFCAGLAFA. Residues H37, H40, C47, C50, H51, H67, C70, C73, H74, C84, C87, and H88 each coordinate heme.

Binds 3 heme groups per subunit.

Functionally, may be involved in anaerobic iron respiration. This is Cytochrome c7 from Geobacter metallireducens (strain ATCC 53774 / DSM 7210 / GS-15).